A 709-amino-acid polypeptide reads, in one-letter code: Protein SOSEKI 3 (709 aa).

The segment at 8-101 is DIX-like oligomerization domain; it reads SSVQVLYQLS…YVLRASELFD (94 aa). 5 disordered regions span residues 242 to 266, 315 to 344, 358 to 393, 411 to 439, and 506 to 560; these read LHTPAPRSLTSPTEPPFSPGSAKRM, RDGRSKSASPSSLNELREVQNEKEKEAEQS, GGSSKGKRTPQSTCEDPLPKSPEAKQMPRSRTKTPC, PSPAVDNKAHSSLDRQEIPPQEECKNRPS, and DSPT…DTKP. A compositionally biased stretch (basic and acidic residues) spans 329-342; that stretch reads ELREVQNEKEKEAE. The segment covering 417–436 has biased composition (basic and acidic residues); that stretch reads NKAHSSLDRQEIPPQEECKN. A compositionally biased stretch (polar residues) spans 529–544; that stretch reads VKTSNSLPRVKTTTSP. A C2HC/C3H-type zinc finger spans residues 663-692; sequence ILQECSTCGRTFKPDSLQVHMRGCHPPQYA. Zn(2+) contacts are provided by Cys667, Cys670, His682, and Cys686.

The protein belongs to the SOSEKI family. In terms of assembly, homodimer. Forms long polymer filaments with other SOKs proteins polymers crucial for polar localization and biological activity. Zn(2+) serves as cofactor.

The protein localises to the cell membrane. Functionally, SOSEKI proteins locally interpret global polarity cues and can influence cell division orientation to coordinate cell polarization relative to body axes. This is Protein SOSEKI 3 from Physcomitrium patens (Spreading-leaved earth moss).